The sequence spans 85 residues: U4-theraphotoxin-Hhn1e (85 aa).

An N-terminal signal peptide occupies residues 1 to 22 (MKVTLIAILTCAAVLVLHTTAA). Positions 23 to 48 (EELEAESQLMEVGMPDTELAAVDEER) are excised as a propeptide. 3 cysteine pairs are disulfide-bonded: Cys-52/Cys-66, Cys-56/Cys-77, and Cys-71/Cys-82.

This sequence belongs to the neurotoxin 12 (Hwtx-2) family. 02 (Hwtx-2) subfamily. As to expression, expressed by the venom gland.

It is found in the secreted. Functionally, postsynaptic neurotoxin. This Cyriopagopus hainanus (Chinese bird spider) protein is U4-theraphotoxin-Hhn1e.